Here is a 1409-residue protein sequence, read N- to C-terminus: MSADIVKQLKGTRSDVKAAATTIELKFKEFSKGIGINDASFPLRYELSVLRQLCLALKDNLHQHADLYCGIAATMLPHVEPYEEKPSLWEAHLTSLRYIHHGLCQEKSLTECQKMYGLIRSQPCRLQEEADYKFYLDIHLTHFNGIYLQMQKETLPLAATDELYYALEAMGVLFDTMHQRKVAKNAALLVQLNDSLFSKRSKAFLKYLSALPPESTTKMYDPLLKLLSCSWATPSSELTNQFTEYLGLVLALVQIDMFSIEAPLEQQLALKLLRICRDLYKDVSPQNYSIQLLYYYVKLMYVREATADFKQTYIDLCKKFVYFFEHKGATHAKEQWFMDLLVFFQRLQTLLHQSSNKPPLDIFWQQLEGDDSSEVYTAHFQLLHGCLGLAVNVVRSPLGTSCSNEACKSIRRHCLLYFGMCALEAYINWQPTTEQKADKAPYKPLLGILGYTLDVAKSMKCLGPSAMELVKLVRLLALVAEKVSCPEQMSLVLAFLEPLQHLRPLIASQDMLSVLRRIYKASVHCKSSDMANRLQSTYLAALTNPSRLRSQLFAHYHNANNTEKCVYEWHESSPMPNPLTPAQTKQLYDVDLLAVLHFLSAPPVPLLQSLLRCRHNDYHLALLARKMRTDSEVVRQCEELRSQLHSTALKQPLSRMQQLAIGHTSISVLLEALEAQKTKFSIKETAENCLEELIVKNNLLELNIKREHRLVELATSAIAGFAAFFERADTEPLGCDDTPIDWEALIDDAVAAAMALSTMGYMAQADEAWLLILRIGQMLDERFTYLRALTHFLGQDHLNSNQQLQLSEEVDRAQELLDDLWPQLQNGWFFKRQHTIVMLCLCHMASYYARQDCLCHAQLLLLQAEELRAQFDERVGKSDIVQITIQTVRFRLEYLRNKRCSSLPRRPTPLRQLDTLVDSVRNYCTVSSVDLGALQLLLADLVRESTECAANRLTERFAFYGTMLNLVLQSGMALRTIEVLISWLWMNLQMEYLDQAQSKLRLLDHLLAIKPLSRTLVEQTSATYVPAIAAKEDLKANAMSELTSNMLLMQLVEPIRKQNQMDVATIKSLPMHEPIPTSHQLQRYVSKQGTPPHLRDSMQLQCIYFIVGCLHARFSFLKRENDQLDDFYVGAGNWLQEDPVRTATLGSMLLVHELYHLNYLRFRKKHKEALSYAEAGLKSVYQTADINYSFNFMVQLKTARLELHPVGKARAKTIRRALAFNTSPEDKRRKGVVEGSIKAKSSARKTPRFKIYTELELRPPIGCSNSSSSSSKSGNENTPPSDHVDLNACQAIEISDDDAASVSASTPAPSQLKRSQSVPAKATKTRSARVGSQLKVPEIIELDDTMEETPSTSTAATVKRYPTTDARSSRARNRQLEETPATTRGRPRRKVPEPAPQQETVSLRPRQRN.

The separase cleavage-site stretch occupies residues 1052–1058; it reads VEPIRKQ. Disordered regions lie at residues 1260 to 1284 and 1297 to 1409; these read PIGC…SDHV and DDAA…RQRN. Low complexity-rich tracts occupy residues 1264–1273 and 1300–1310; these read SNSSSSSSKS and ASVSASTPAPS.

Interacts with pim and Sse. Cleavage of thr contributes to inactivation of Sse.

Its subcellular location is the cytoplasm. Its function is as follows. Required specifically for chromosome disjunction during all mitoses; maternally provided protein is sufficient until mitosis 14 then zygotic protein is required. Involved in formation and/or maintenance of epithelial structures: bud extension during Malpighian tubule development, and foregut and hindgut morphogenesis. The protein is Protein three rows (thr) of Drosophila pseudoobscura pseudoobscura (Fruit fly).